Consider the following 445-residue polypeptide: Histamine H3 receptor (445 aa).

At 1–40 (MERAPPDGLMNASGALAGEAAAAAGGARTFSAAWTAVLAA) the chain is on the extracellular side. An N-linked (GlcNAc...) asparagine glycan is attached at Asn-11. Residues 41 to 61 (LMALLIVATVLGNALVMLAFV) traverse the membrane as a helical segment. Residues 62–71 (ADSSLRTQNN) are Cytoplasmic-facing. A helical membrane pass occupies residues 72–92 (FFLLNLAISDFLVGVFCIPLY). Residues 93–109 (VPYVLTGRWTFGRGLCK) lie on the Extracellular side of the membrane. A disulfide bridge links Cys-108 with Cys-189. Residues 110–130 (LWLVVDYLLCTSSVFNIVLIS) form a helical membrane-spanning segment. At 131-157 (YDRFLSVTRAVSYRAQQGDTRRAVRKM) the chain is on the cytoplasmic side. A helical transmembrane segment spans residues 158 to 178 (VLVWVLAFLLYGPAILSWEYL). Over 179–197 (SGGSSIPEGHCYAEFFYNW) the chain is Extracellular. A helical transmembrane segment spans residues 198 to 218 (YFLITASTLEFFTPFLSVTFF). Residues 219–359 (NLSIYLNIQR…LSRDKKVAKS (141 aa)) are Cytoplasmic-facing. Disordered stretches follow at residues 236–264 (GGAR…WGCW) and 288–336 (AGEA…LEKR). A compositionally biased stretch (low complexity) spans 299–312 (AAASPTSSSGSSSR). A helical transmembrane segment spans residues 360–380 (LAIIVSIFGLCWAPYTLLMII). At 381–398 (RAACHGHCVPDYWYETSF) the chain is on the extracellular side. A helical transmembrane segment spans residues 399 to 419 (WLLWANSAVNPVLYPLCHYSF). At 420–445 (RRAFTKLLCPQKLKVQPHSSLEHCWK) the chain is on the cytoplasmic side. Ser-439 carries the phosphoserine modification.

It belongs to the G-protein coupled receptor 1 family. As to expression, expressed widely and abundantly throughout the brain. Highly expressed in discrete neuronal populations such as pyramidal cells in cerebral cortex or cerebellar Purkinje cells.

The protein resides in the cell membrane. In terms of biological role, the H3 subclass of histamine receptors could mediate the histamine signals in CNS and peripheral nervous system. Signals through the inhibition of adenylate cyclase and displays high constitutive activity (spontaneous activity in the absence of agonist). The polypeptide is Histamine H3 receptor (HRH3) (Cavia porcellus (Guinea pig)).